The primary structure comprises 131 residues: Protein FAM107B (131 aa).

Residue A2 is modified to N-acetylalanine. Disordered regions lie at residues 39–78 (MNQK…KKKS) and 100–131 (KLQE…AQES). N6-acetyllysine is present on K50. Positions 52–78 (ELQKVMEKRKRDQVIKQKEEEAQKKKS) are enriched in basic and acidic residues. The stretch at 61-112 (KRDQVIKQKEEEAQKKKSDLEIELLKRQQKLEQLELEKQKLQEEQENAPEFV) forms a coiled coil.

The protein belongs to the FAM107 family.

This is Protein FAM107B from Homo sapiens (Human).